The sequence spans 633 residues: Chaperone protein DnaK (633 aa).

A Phosphothreonine; by autocatalysis modification is found at Thr196. The disordered stretch occupies residues 594–633 (NLYGQPGAEPQPETNGHAGGSKGGDGAVNAEYEVIDGDDK). Residues 610-619 (HAGGSKGGDG) show a composition bias toward gly residues.

This sequence belongs to the heat shock protein 70 family.

Its function is as follows. Acts as a chaperone. The chain is Chaperone protein DnaK from Chlorobaculum tepidum (strain ATCC 49652 / DSM 12025 / NBRC 103806 / TLS) (Chlorobium tepidum).